The following is a 63-amino-acid chain: Large ribosomal subunit protein bL32 (63 aa).

The segment covering M1–S18 has biased composition (basic residues). A disordered region spans residues M1 to N26.

The protein belongs to the bacterial ribosomal protein bL32 family.

The chain is Large ribosomal subunit protein bL32 from Neorickettsia sennetsu (strain ATCC VR-367 / Miyayama) (Ehrlichia sennetsu).